The following is a 307-amino-acid chain: Cyclin-dependent kinase 5 activator 1 (307 aa).

Ser8 is subject to Phosphoserine; by CDK5. Residues 96-136 (STFAQPPPAQPPAPPANQLSGSQTGVSSSVKKAPHPSVTSA) are disordered. Positions 100–110 (QPPPAQPPAPP) are enriched in pro residues. Residues 112 to 125 (NQLSGSQTGVSSSV) show a composition bias toward polar residues. Thr138 is subject to Phosphothreonine; by CDK5.

This sequence belongs to the cyclin-dependent kinase 5 activator family. In terms of assembly, heterodimer composed of a catalytic subunit CDK5 and a regulatory subunit CDK5R1 (p25) and macromolecular complex composed of at least CDK5, CDK5R1 (p35) and CDK5RAP1 or CDK5RAP2 or CDK5RAP3. Only the heterodimer shows kinase activity. Interacts with EPHA4 and NGEF; may mediate the activation of NGEF by EPHA4. Interacts with RASGRF2. The complex p35/CDK5 interacts with CLOCK. Post-translationally, the p35 form is proteolytically cleaved by calpain, giving rise to the p25 form. P35 has a 5 to 10 fold shorter half-life compared to p25. The conversion results in deregulation of the CDK5 kinase: p25/CDK5 kinase displays an increased and altered tau phosphorylation in comparison to the p35/CDK5 kinase in vivo. In terms of processing, myristoylated. A proper myristoylation signal is essential for the proper distribution of p35. Phosphorylation at Ser-8 and Thr-138 by CDK5 prevents calpain-mediated proteolysis. Post-translationally, ubiquitinated, leading to its degradation: degradation of p35 by proteasome results in down-regulation of CDK5 activity. During this process, CDK5 phosphorylates p35 and induces its ubiquitination and subsequent degradation. Ubiquitinated by the CRL2(FEM1B) complex, which recognizes the -Gly-Leu-Asp-Arg C-degron at the C-terminus, leading to its degradation. As to expression, brain and neuron specific.

It localises to the cell membrane. The protein resides in the cell projection. Its subcellular location is the neuron projection. It is found in the nucleus. The protein localises to the cytoplasm. It localises to the perinuclear region. The protein resides in the perikaryon. In terms of biological role, p35 is a neuron specific activator of CDK5. The complex p35/CDK5 is required for neurite outgrowth and cortical lamination. Involved in dendritic spine morphogenesis by mediating the EFNA1-EPHA4 signaling. Activator of TPKII. The complex p35/CDK5 participates in the regulation of the circadian clock by modulating the function of CLOCK protein: phosphorylates CLOCK at 'Thr-451' and 'Thr-461' and regulates the transcriptional activity of the CLOCK-BMAL1 heterodimer in association with altered stability and subcellular distribution. The chain is Cyclin-dependent kinase 5 activator 1 (CDK5R1) from Spermophilus citellus (European ground squirrel).